A 122-amino-acid polypeptide reads, in one-letter code: Prefoldin subunit 1 (122 aa).

Position 2 is an N-acetylalanine (Ala-2).

This sequence belongs to the prefoldin subunit beta family. As to quaternary structure, heterohexamer of two PFD-alpha type and four PFD-beta type subunits.

Functionally, binds specifically to cytosolic chaperonin (c-CPN) and transfers target proteins to it. Binds to nascent polypeptide chain and promotes folding in an environment in which there are many competing pathways for nonnative proteins. This Homo sapiens (Human) protein is Prefoldin subunit 1 (PFDN1).